A 380-amino-acid polypeptide reads, in one-letter code: O-phospho-L-seryl-tRNA:Cys-tRNA synthase (380 aa).

Residues 86–87, Asn-192, and 215–217 contribute to the pyridoxal 5'-phosphate site; these read AR and SGH. At Lys-218 the chain carries N6-(pyridoxal phosphate)lysine.

It belongs to the SepCysS family. In terms of assembly, homodimer. Interacts with SepRS. The cofactor is pyridoxal 5'-phosphate.

The enzyme catalyses O-phospho-L-seryl-tRNA(Cys) + hydrogen sulfide + H(+) = L-cysteinyl-tRNA(Cys) + phosphate. In terms of biological role, converts O-phospho-L-seryl-tRNA(Cys) (Sep-tRNA(Cys)) to L-cysteinyl-tRNA(Cys) (Cys-tRNA(Cys)). This chain is O-phospho-L-seryl-tRNA:Cys-tRNA synthase, found in Methanococcus maripaludis (strain DSM 14266 / JCM 13030 / NBRC 101832 / S2 / LL).